The sequence spans 217 residues: Peptide methionine sulfoxide reductase MsrA (217 aa).

Cys56 is a catalytic residue.

This sequence belongs to the MsrA Met sulfoxide reductase family.

It carries out the reaction L-methionyl-[protein] + [thioredoxin]-disulfide + H2O = L-methionyl-(S)-S-oxide-[protein] + [thioredoxin]-dithiol. The catalysed reaction is [thioredoxin]-disulfide + L-methionine + H2O = L-methionine (S)-S-oxide + [thioredoxin]-dithiol. Functionally, has an important function as a repair enzyme for proteins that have been inactivated by oxidation. Catalyzes the reversible oxidation-reduction of methionine sulfoxide in proteins to methionine. This Corynebacterium melassecola protein is Peptide methionine sulfoxide reductase MsrA.